A 224-amino-acid polypeptide reads, in one-letter code: UPF0758 protein Csal_2972 (224 aa).

An MPN domain is found at Ala102–Leu224. His173, His175, and Asp186 together coordinate Zn(2+). Positions His173–Asp186 match the JAMM motif motif.

This sequence belongs to the UPF0758 family.

The polypeptide is UPF0758 protein Csal_2972 (Chromohalobacter salexigens (strain ATCC BAA-138 / DSM 3043 / CIP 106854 / NCIMB 13768 / 1H11)).